The chain runs to 408 residues: Secreted effector protein SseJ (408 aa).

S151 serves as the catalytic Nucleophile. Residues D381 and H384 contribute to the active site.

Belongs to the 'GDSL' lipolytic enzyme family. As to quaternary structure, interacts with RhoA and indirectly with SifA.

It localises to the secreted. It is found in the host cytoplasm. Functionally, effector proteins function to alter host cell physiology and promote bacterial survival in host tissues. This protein is required for endosomal tubulation and negatively regulates the formation of Salmonella-induced filaments (Sifs) in epithelial cells. Has both deacylase and esterification activities in vitro, but esterification is probably the dominant activity in host cells. Significantly contributes to cholesterol esterification, which reduces cellular cholesterol in cells and abrogates the ability of SifA to associate with cholesterol and LAMP-1 vesicles. The protein is Secreted effector protein SseJ (sseJ) of Salmonella typhimurium (strain LT2 / SGSC1412 / ATCC 700720).